Reading from the N-terminus, the 337-residue chain is Mitochondrial glutathione transporter SLC25A40 (337 aa).

Solcar repeat units lie at residues 14 to 132, 140 to 224, and 234 to 328; these read VTPL…LSAF, NETR…LKRW, and PTFM…GKSF. Helical transmembrane passes span 20–40, 104–124, 146–166, 200–221, 240–260, and 299–319; these read MIASCTGAVLTSLMVTPLDVV, LWSGLPPTLVMAIPATVIYFT, IVAGVVARFGAVTVISPLELI, WAPTILRDVPFSAMYWYNYENL, FTSGALSGSFAAVATLPFDVV, and GLFTGLIPRLVKIVPACAIMI.

It belongs to the mitochondrial carrier (TC 2.A.29) family.

It localises to the mitochondrion inner membrane. It carries out the reaction glutathione(in) = glutathione(out). In terms of biological role, probable mitochondrial transporter required for glutathione import into mitochondria. Glutathione, which plays key roles in oxidative metabolism, is produced exclusively in the cytosol and is imported in many organelles. Mitochondrial glutathione is required for the activity and stability of proteins containing iron-sulfur clusters, as well as erythropoiesis. The sequence is that of Mitochondrial glutathione transporter SLC25A40 from Mus musculus (Mouse).